We begin with the raw amino-acid sequence, 94 residues long: Progonadoliberin-1 (94 aa).

A signal peptide spans 1–22 (MAAKILALWLLLAGTVFPQGCC). The residue at position 23 (Q23) is a Pyrrolidone carboxylic acid. G32 bears the Glycine amide mark.

The protein belongs to the GnRH family. Synthesized in preoptic neurons and is transported to the pituitary in the preoptic-hypophyseal axons.

The protein resides in the secreted. In terms of biological role, stimulates the secretion of gonadotropins. May be responsible for the regulation of the hypothalamic-pituitary-gonadal axis. The chain is Progonadoliberin-1 (gnrh1) from Haplochromis burtoni (Burton's mouthbrooder).